The primary structure comprises 135 residues: Ribosome-binding factor A (135 aa).

This sequence belongs to the RbfA family. As to quaternary structure, monomer. Binds 30S ribosomal subunits, but not 50S ribosomal subunits or 70S ribosomes.

Its subcellular location is the cytoplasm. Its function is as follows. One of several proteins that assist in the late maturation steps of the functional core of the 30S ribosomal subunit. Associates with free 30S ribosomal subunits (but not with 30S subunits that are part of 70S ribosomes or polysomes). Required for efficient processing of 16S rRNA. May interact with the 5'-terminal helix region of 16S rRNA. The polypeptide is Ribosome-binding factor A (Dinoroseobacter shibae (strain DSM 16493 / NCIMB 14021 / DFL 12)).